The primary structure comprises 349 residues: Green-sensitive opsin-1 (349 aa).

Residues 1 to 36 (MNGTEGSNFYIPMSNRTGLVRSPYDYTQYYLAEPWK) are Extracellular-facing. 2 N-linked (GlcNAc...) asparagine glycosylation sites follow: Asn2 and Asn15. Residues 37 to 61 (FKALAFYMFLLIIFGFPINVLTLVV) form a helical membrane-spanning segment. Residues 62–73 (TAQHKKLRQPLN) lie on the Cytoplasmic side of the membrane. A helical membrane pass occupies residues 74 to 99 (YILVNLAFAGTIMVIFGFTVSFYCSL). Residues 100-113 (VGYMALGPLGCVME) lie on the Extracellular side of the membrane. The cysteines at positions 110 and 187 are disulfide-linked. A helical transmembrane segment spans residues 114-133 (GFFATLGGQVALWSLVVLAI). At 134 to 152 (ERYIVVCKPMGSFKFSANH) the chain is on the cytoplasmic side. Residues 153-176 (AMAGIAFTWFMACSCAVPPLFGWS) traverse the membrane as a helical segment. Topologically, residues 177-202 (RYLPEGMQTSCGPDYYTLNPEYNNES) are extracellular. Residue Asn200 is glycosylated (N-linked (GlcNAc...) asparagine). The helical transmembrane segment at 203 to 230 (YVMYMFSCHFCIPVTTIFFTYGSLVCTV) threads the bilayer. Residues 231-252 (KAAAAQQQESESTQKAEREVTR) lie on the Cytoplasmic side of the membrane. A helical membrane pass occupies residues 253–276 (MVILMVLGFLFAWVPYASFAAWIF). Residues 277 to 284 (FNRGAAFS) lie on the Extracellular side of the membrane. The helical transmembrane segment at 285–309 (AQAMAVPAFFSKTSAVFNPIIYVLL) threads the bilayer. Lys296 carries the N6-(retinylidene)lysine modification. Over 310-349 (NKQFRSCMLNTLFCGKSPLGDDESSSVSTSKTEVSSVSPA) the chain is Cytoplasmic. Positions 328–349 (LGDDESSSVSTSKTEVSSVSPA) are disordered. Over residues 334-349 (SSVSTSKTEVSSVSPA) the composition is skewed to low complexity.

It belongs to the G-protein coupled receptor 1 family. Opsin subfamily. Post-translationally, phosphorylated on some or all of the serine and threonine residues present in the C-terminal region. Retinal double cone accessory photoreceptor cell outer segments.

It localises to the membrane. Functionally, visual pigments are the light-absorbing molecules that mediate vision. They consist of an apoprotein, opsin, covalently linked to cis-retinal. This Danio rerio (Zebrafish) protein is Green-sensitive opsin-1 (opn1mw1).